Here is a 246-residue protein sequence, read N- to C-terminus: Ribonuclease PH (246 aa).

Phosphate contacts are provided by residues arginine 91 and glycine 129–arginine 131.

It belongs to the RNase PH family. Homohexameric ring arranged as a trimer of dimers.

It catalyses the reaction tRNA(n+1) + phosphate = tRNA(n) + a ribonucleoside 5'-diphosphate. Its function is as follows. Phosphorolytic 3'-5' exoribonuclease that plays an important role in tRNA 3'-end maturation. Removes nucleotide residues following the 3'-CCA terminus of tRNAs; can also add nucleotides to the ends of RNA molecules by using nucleoside diphosphates as substrates, but this may not be physiologically important. Probably plays a role in initiation of 16S rRNA degradation (leading to ribosome degradation) during starvation. This is Ribonuclease PH from Burkholderia orbicola (strain MC0-3).